Reading from the N-terminus, the 321-residue chain is DNA repair and recombination protein RadA (321 aa).

111–118 contacts ATP; it reads GEFGSGKT.

Belongs to the eukaryotic RecA-like protein family.

In terms of biological role, involved in DNA repair and in homologous recombination. Binds and assemble on single-stranded DNA to form a nucleoprotein filament. Hydrolyzes ATP in a ssDNA-dependent manner and promotes DNA strand exchange between homologous DNA molecules. In Sulfolobus acidocaldarius (strain ATCC 33909 / DSM 639 / JCM 8929 / NBRC 15157 / NCIMB 11770), this protein is DNA repair and recombination protein RadA.